The following is a 199-amino-acid chain: Recombination protein RecR (199 aa).

Residues 56–71 form a C4-type zinc finger; it reads CAICGNVAEHEQCRIC. Positions 79 to 174 constitute a Toprim domain; that stretch reads TVLCVVEEPK…RVTRLASGLP (96 aa).

This sequence belongs to the RecR family.

May play a role in DNA repair. It seems to be involved in an RecBC-independent recombinational process of DNA repair. It may act with RecF and RecO. The protein is Recombination protein RecR of Acidothermus cellulolyticus (strain ATCC 43068 / DSM 8971 / 11B).